Here is a 319-residue protein sequence, read N- to C-terminus: Extracellular phospholipase A1 (319 aa).

The N-terminal stretch at 1–24 (MSMPLSFTSAVSPVAAIPTPRAAA) is a signal peptide.

It carries out the reaction a 1,2-diacyl-sn-glycero-3-phosphocholine + H2O = a 2-acyl-sn-glycero-3-phosphocholine + a fatty acid + H(+). The protein is Extracellular phospholipase A1 (phlA) of Serratia liquefaciens.